Consider the following 349-residue polypeptide: tRNA pseudouridine synthase D (349 aa).

The tract at residues 1–22 is disordered; sequence MTDAPLVTAELPGSGGSLRRSP. Asp78 serves as the catalytic Nucleophile. Positions 150 to 304 constitute a TRUD domain; the sequence is GLPNLFGPQR…AEGTRRAARL (155 aa).

This sequence belongs to the pseudouridine synthase TruD family.

It carries out the reaction uridine(13) in tRNA = pseudouridine(13) in tRNA. Functionally, responsible for synthesis of pseudouridine from uracil-13 in transfer RNAs. In Anaeromyxobacter sp. (strain Fw109-5), this protein is tRNA pseudouridine synthase D.